The primary structure comprises 144 residues: Cell division protein SepF (144 aa).

The interval 16–42 (DEMNEAPYTEAEQQEEEVPQAQKNERR) is disordered.

This sequence belongs to the SepF family. As to quaternary structure, homodimer. Interacts with FtsZ.

The protein resides in the cytoplasm. Cell division protein that is part of the divisome complex and is recruited early to the Z-ring. Probably stimulates Z-ring formation, perhaps through the cross-linking of FtsZ protofilaments. Its function overlaps with FtsA. In Lactobacillus gasseri (strain ATCC 33323 / DSM 20243 / BCRC 14619 / CIP 102991 / JCM 1131 / KCTC 3163 / NCIMB 11718 / NCTC 13722 / AM63), this protein is Cell division protein SepF.